Here is an 88-residue protein sequence, read N- to C-terminus: Small ribosomal subunit protein bS18A (88 aa).

The protein belongs to the bacterial ribosomal protein bS18 family. In terms of assembly, part of the 30S ribosomal subunit. Forms a tight heterodimer with protein bS6.

In terms of biological role, binds as a heterodimer with protein bS6 to the central domain of the 16S rRNA, where it helps stabilize the platform of the 30S subunit. The polypeptide is Small ribosomal subunit protein bS18A (Mycolicibacterium gilvum (strain PYR-GCK) (Mycobacterium gilvum (strain PYR-GCK))).